Here is a 305-residue protein sequence, read N- to C-terminus: Nucleotide-binding protein Rxyl_2009 (305 aa).

ATP is bound at residue 24–31; it reads GLSGAGKS. 75–78 lines the GTP pocket; it reads DIRG.

The protein belongs to the RapZ-like family.

Displays ATPase and GTPase activities. This Rubrobacter xylanophilus (strain DSM 9941 / JCM 11954 / NBRC 16129 / PRD-1) protein is Nucleotide-binding protein Rxyl_2009.